The following is a 410-amino-acid chain: Scarecrow-like protein 32 (410 aa).

Positions 18-408 (LRGCGDANFM…HSVVFATVWV (391 aa)) constitute a GRAS domain. The interval 25-88 (NFMEQLLLHC…AVSKTPTLSS (64 aa)) is leucine repeat I (LRI). Residues 107-188 (LAAFVDLTPW…HFPPFINISY (82 aa)) form a VHIID region. The short motif at 138-142 (VHIVD) is the VHIID element. The leucine repeat II (LRII) stretch occupies residues 190–227 (ELGSKLVNFATTRNITMEFTIVPSTYSDGFSSLLQQLR). The interval 237–329 (LVVNCHMMLR…EAEISWKIEN (93 aa)) is PFYRE. Residues 332 to 408 (AKEGAERVER…HSVVFATVWV (77 aa)) form an SAW region.

It belongs to the GRAS family. In terms of tissue distribution, expressed in seedlings, leaves and flowers.

The protein resides in the nucleus. Functionally, probable transcription factor involved in plant development. The polypeptide is Scarecrow-like protein 32 (SCL32) (Arabidopsis thaliana (Mouse-ear cress)).